Reading from the N-terminus, the 133-residue chain is Ribulose bisphosphate carboxylase small subunit (133 aa).

This sequence belongs to the RuBisCO small chain family. As to quaternary structure, heterohexadecamer of 8 large and 8 small subunits.

Functionally, ruBisCO catalyzes two reactions: the carboxylation of D-ribulose 1,5-bisphosphate, the primary event in carbon dioxide fixation, as well as the oxidative fragmentation of the pentose substrate. Both reactions occur simultaneously and in competition at the same active site. Although the small subunit is not catalytic it is essential for maximal activity. This Xanthobacter flavus protein is Ribulose bisphosphate carboxylase small subunit.